The following is a 266-amino-acid chain: Undecaprenyl-diphosphatase (266 aa).

A run of 8 helical transmembrane segments spans residues 1–21, 39–59, 86–106, 117–137, 153–173, 190–210, 216–236, and 246–266; these read MDFLKFIFYGIIQGLTEFIPV, PGSSLSAIIQIGSVLAIFWYF, SIFIGTIPIVLIGGIVKLFVT, FSIAVVSILMSLIMFLADIST, FIGISQAFAIIPGVSRSGATI, SFLLGIPSISLAAFVEFITSI, FPFLPLFVGLITTFFSSLLAI, and NGLKIFIYYRLVFGILIILNL.

It belongs to the UppP family.

The protein resides in the cell inner membrane. The catalysed reaction is di-trans,octa-cis-undecaprenyl diphosphate + H2O = di-trans,octa-cis-undecaprenyl phosphate + phosphate + H(+). In terms of biological role, catalyzes the dephosphorylation of undecaprenyl diphosphate (UPP). Confers resistance to bacitracin. In Prochlorococcus marinus (strain MIT 9515), this protein is Undecaprenyl-diphosphatase.